A 250-amino-acid polypeptide reads, in one-letter code: Leucyl/phenylalanyl-tRNA--protein transferase (250 aa).

Belongs to the L/F-transferase family.

Its subcellular location is the cytoplasm. The catalysed reaction is N-terminal L-lysyl-[protein] + L-leucyl-tRNA(Leu) = N-terminal L-leucyl-L-lysyl-[protein] + tRNA(Leu) + H(+). It carries out the reaction N-terminal L-arginyl-[protein] + L-leucyl-tRNA(Leu) = N-terminal L-leucyl-L-arginyl-[protein] + tRNA(Leu) + H(+). The enzyme catalyses L-phenylalanyl-tRNA(Phe) + an N-terminal L-alpha-aminoacyl-[protein] = an N-terminal L-phenylalanyl-L-alpha-aminoacyl-[protein] + tRNA(Phe). Its function is as follows. Functions in the N-end rule pathway of protein degradation where it conjugates Leu, Phe and, less efficiently, Met from aminoacyl-tRNAs to the N-termini of proteins containing an N-terminal arginine or lysine. The chain is Leucyl/phenylalanyl-tRNA--protein transferase from Cupriavidus necator (strain ATCC 17699 / DSM 428 / KCTC 22496 / NCIMB 10442 / H16 / Stanier 337) (Ralstonia eutropha).